The chain runs to 599 residues: Elongation factor 4 (599 aa).

Residues Ser-5–Val-187 form the tr-type G domain. GTP is bound by residues Asp-17–Thr-22 and Asn-134–Asp-137.

It belongs to the TRAFAC class translation factor GTPase superfamily. Classic translation factor GTPase family. LepA subfamily.

The protein resides in the cell inner membrane. It catalyses the reaction GTP + H2O = GDP + phosphate + H(+). Its function is as follows. Required for accurate and efficient protein synthesis under certain stress conditions. May act as a fidelity factor of the translation reaction, by catalyzing a one-codon backward translocation of tRNAs on improperly translocated ribosomes. Back-translocation proceeds from a post-translocation (POST) complex to a pre-translocation (PRE) complex, thus giving elongation factor G a second chance to translocate the tRNAs correctly. Binds to ribosomes in a GTP-dependent manner. The polypeptide is Elongation factor 4 (Saccharophagus degradans (strain 2-40 / ATCC 43961 / DSM 17024)).